Reading from the N-terminus, the 356-residue chain is Ferrochelatase (356 aa).

2 residues coordinate Fe cation: His214 and Glu295.

It belongs to the ferrochelatase family.

It is found in the cytoplasm. It catalyses the reaction heme b + 2 H(+) = protoporphyrin IX + Fe(2+). It participates in porphyrin-containing compound metabolism; protoheme biosynthesis; protoheme from protoporphyrin-IX: step 1/1. Catalyzes the ferrous insertion into protoporphyrin IX. This chain is Ferrochelatase, found in Paraburkholderia phymatum (strain DSM 17167 / CIP 108236 / LMG 21445 / STM815) (Burkholderia phymatum).